The sequence spans 107 residues: Phosphoribosyl-ATP pyrophosphatase (107 aa).

The protein belongs to the PRA-PH family.

It localises to the cytoplasm. It carries out the reaction 1-(5-phospho-beta-D-ribosyl)-ATP + H2O = 1-(5-phospho-beta-D-ribosyl)-5'-AMP + diphosphate + H(+). The protein operates within amino-acid biosynthesis; L-histidine biosynthesis; L-histidine from 5-phospho-alpha-D-ribose 1-diphosphate: step 2/9. This Caulobacter sp. (strain K31) protein is Phosphoribosyl-ATP pyrophosphatase.